The primary structure comprises 543 residues: Steroid receptor seven-up, isoforms B/C (543 aa).

The tract at residues 38 to 191 (PPHSAWHEPP…HSQSSNSGSQ (154 aa)) is disordered. Over residues 56 to 68 (AASAGPGTTTGSV) the composition is skewed to low complexity. Positions 83 to 101 (QQSAVIKQDLSCPSLNQAG) are enriched in polar residues. The segment covering 122 to 141 (GSAGGHHSGSGSGSGSGVNP) has biased composition (gly residues). Polar residues predominate over residues 158–170 (MLTSIKGQPTGCG). Residues 171 to 191 (STTPSSQANSSHSQSSNSGSQ) show a composition bias toward low complexity. Positions 197–272 (NIECVVCGDK…MGMRREAVQR (76 aa)) form a DNA-binding region, nuclear receptor. NR C4-type zinc fingers lie at residues 200–220 (CVVC…CEGC) and 236–260 (CRGS…LKKC). In terms of domain architecture, NR LBD spans 307–532 (YLSSYISLLL…TLIRDMLLSG (226 aa)).

Belongs to the nuclear hormone receptor family. NR2 subfamily. Expressed in several embryonic tissues; dorsal vessel, oenocyte and fat body. CNS expression is dynamic and confined to temporally restricted subsections of the NB lineage; expressed in many NB and GMCs, but only a small number of neurons.

It localises to the nucleus. Receptor that is required in photoreceptors R1, R3, R4 and R6 during eye development; generation of the ganglion mother cell-2 (GMC-2) fate in the nb7-3 lineage, coinciding with the transition in the expression of HB to KR in the neuroblasts (NBs). The chain is Steroid receptor seven-up, isoforms B/C (svp) from Drosophila melanogaster (Fruit fly).